Reading from the N-terminus, the 176-residue chain is Large ribosomal subunit protein uL6 (176 aa).

Belongs to the universal ribosomal protein uL6 family. Part of the 50S ribosomal subunit.

Functionally, this protein binds to the 23S rRNA, and is important in its secondary structure. It is located near the subunit interface in the base of the L7/L12 stalk, and near the tRNA binding site of the peptidyltransferase center. This chain is Large ribosomal subunit protein uL6, found in Burkholderia vietnamiensis (strain G4 / LMG 22486) (Burkholderia cepacia (strain R1808)).